The chain runs to 226 residues: Phosphoribosyl-dephospho-CoA transferase (226 aa).

Residues D148 and D150 contribute to the active site.

The protein belongs to the MdcG family.

The catalysed reaction is apo-[malonate decarboxylase ACP] + 2'-(5''-triphospho-alpha-D-ribosyl)-3'-dephospho-CoA = holo-[malonate decarboxylase ACP] + diphosphate. Functionally, transfers 2'-(5-triphosphoribosyl)-3'-dephosphocoenzyme-A to the apo-[acyl-carrier-protein] of the malonate decarboxylase to yield holo-[acyl-carrier-protein]. This is Phosphoribosyl-dephospho-CoA transferase from Bradyrhizobium diazoefficiens (strain JCM 10833 / BCRC 13528 / IAM 13628 / NBRC 14792 / USDA 110).